Reading from the N-terminus, the 527-residue chain is MKIQNIIVYVFLIFSCFSCEEFLEEDPRALIAPETFYQSESDVRQAVVGLYSILKNNSIYGQLGLDLFYDNGADIIEPNRSTNVVEPLGNYSLNEAIADVSVQKMSVSDTWKDLYRVIYNANIILDNVDGNDAISEEAQIDIMAEVKFIRALCYWHIVNLWGDAPFYTEPLVLEEIRVLGRTDEDTILSTVVSDLQYAQVHLASVYPEEDRGRASKWAAAIVEAKIHMQEQNWQAGLNKCMEIISQSPHSLLGNYADVFNPNNEYNSEIIWSLDFAKDIRGQFEEGTLGADGSFPSVFGNGNWRPSMFAPRLRDEPKNSSERNALAAALQANGEAFNGTGLQVASKDFAGKFPRNDYRRALNIVDNYLGFDLNFPYMAKIWNLDVDNSPRFNHSDNRIVFRLADVYLMAAECENELNGPANAFQYINKVRERAFATQTEWELKGLDQQGFREAIYDERKWELAGECHRRYDLIRWGILLDVVQDLEYRFWTPNTNIRPYHVKLPIPLQELQVNPVLLESDATNNGYR.

The signal sequence occupies residues 1–15 (MKIQNIIVYVFLIFS). The N-palmitoyl cysteine moiety is linked to residue Cys-16. Residue Cys-16 is the site of S-diacylglycerol cysteine attachment.

Belongs to the SusD family.

It localises to the cell outer membrane. Functionally, polysaccharide-binding protein probably involved in ulvan degradation. Ulvan is the main polysaccharide component of the Ulvales (green seaweed) cell wall. It is composed of disaccharide building blocks comprising 3-sulfated rhamnose (Rha3S) linked to D-glucuronic acid (GlcA), L-iduronic acid (IduA), or D-xylose (Xyl). The SusD-like protein may mediate ulvan oligomer-binding before transport in the periplasm for further degradation. In Formosa agariphila (strain DSM 15362 / KCTC 12365 / LMG 23005 / KMM 3901 / M-2Alg 35-1), this protein is SusD-like protein P25.